Here is a 403-residue protein sequence, read N- to C-terminus: Lissencephaly-1 homolog 1 (403 aa).

Residues 7-38 enclose the LisH domain; that stretch reads QRDELNQAIHQYLLISYQQSAQLFKTEAAVKD. Residues 51–87 are a coiled coil; that stretch reads NSIVRLSKRVITLEQQVEQLNEQLAQAQAGKIQFNKS. 7 WD repeats span residues 103-142, 145-184, 187-226, 229-270, 271-327, 330-369, and 373-403; these read GHRA…FEKT, GHTS…CVKT, GHEH…CKKT, EHQE…HQLS, GHEH…NLFT, GHDN…QKKK, and AHDK…WLLS.

The protein belongs to the WD repeat LIS1/nudF family.

The protein resides in the cytoplasm. It localises to the cytoskeleton. It is found in the microtubule organizing center. Its subcellular location is the centrosome. Positively regulates the activity of the minus-end directed microtubule motor protein dynein. May enhance dynein-mediated microtubule sliding by targeting dynein to the microtubule plus end. Required for several dynein- and microtubule-dependent processes. The polypeptide is Lissencephaly-1 homolog 1 (Paramecium tetraurelia).